Here is a 150-residue protein sequence, read N- to C-terminus: SPbeta prophage-derived uncharacterized protein YoqH (150 aa).

Residues 1–23 form the signal peptide; the sequence is MKRFILVLSFLSIIVAYPIQTNA.

This chain is SPbeta prophage-derived uncharacterized protein YoqH (yoqH), found in Bacillus subtilis (strain 168).